The primary structure comprises 306 residues: D-alanine--D-alanine ligase (306 aa).

One can recognise an ATP-grasp domain in the interval 104–303; sequence KMLWKAFGLP…FEQLVVKILE (200 aa). 134–189 provides a ligand contact to ATP; the sequence is VAKLGLPLMVKPSLEGSSVGLTKVKAVEELKSAVEYALKFDNTILIEEWLAGDELT. 3 residues coordinate Mg(2+): Asp-257, Glu-270, and Asn-272.

Belongs to the D-alanine--D-alanine ligase family. Requires Mg(2+) as cofactor. The cofactor is Mn(2+).

Its subcellular location is the cytoplasm. It catalyses the reaction 2 D-alanine + ATP = D-alanyl-D-alanine + ADP + phosphate + H(+). Its pathway is cell wall biogenesis; peptidoglycan biosynthesis. Cell wall formation. The polypeptide is D-alanine--D-alanine ligase (Haemophilus influenzae (strain PittGG)).